A 127-amino-acid chain; its full sequence is Protein chibby homolog 1 (127 aa).

Positions 1–25 (MPLFGSIFSPKKTPPRKSASLSNLH) are disordered. Ser-9 and Ser-20 each carry phosphoserine. Positions 60–112 (VADSVISGGVDRRETQRLRKRNQQLEEENNLLRLKVDILLDMLSETTAESHLK) are minimal region for the interaction with PKD2. Positions 68-110 (GVDRRETQRLRKRNQQLEEENNLLRLKVDILLDMLSETTAESH) form a coiled coil. The tract at residues 77–98 (LRKRNQQLEEENNLLRLKVDIL) is leucine-zipper; mediates homodimerization.

The protein belongs to the chibby family. In terms of assembly, homodimer. Homodimerization is essential for nuclear localization and interaction with KPNA4 but is dispensable for interaction with CTNNB1. Interacts with polycystin-2/PKD2 and GM130. Interacts with the C-terminal region of CTNNB1. Interacts (C-terminus) with TCIM (C-terminus), TCIM competes with CTNNB1 for the interaction with CBY1. Interacts with FAM92A; this interaction facilitates targeting of FAM92A to cilium basal body. Interacts with CIBAR2. Interacts with KPNA4.

Its subcellular location is the nucleus speckle. The protein resides in the cytoplasm. It is found in the cytoskeleton. The protein localises to the cilium basal body. It localises to the microtubule organizing center. Its subcellular location is the centrosome. The protein resides in the centriole. It is found in the golgi apparatus. The protein localises to the trans-Golgi network. It localises to the cell projection. Its subcellular location is the cilium. The protein resides in the flagellum. It is found in the nucleus. Inhibits the Wnt/Wingless pathway by binding to CTNNB1/beta-catenin and inhibiting beta-catenin-mediated transcriptional activation through competition with TCF/LEF transcription factors. Has also been shown to play a role in regulating the intracellular trafficking of polycystin-2/PKD2 and possibly of other intracellular proteins. Promotes adipocyte and cardiomyocyte differentiation. In Rattus norvegicus (Rat), this protein is Protein chibby homolog 1 (Cby1).